Here is a 363-residue protein sequence, read N- to C-terminus: Suberization-associated anionic peroxidase (363 aa).

The first 20 residues, 1–20, serve as a signal peptide directing secretion; it reads MGFRLSHLSLALSFVALALA. The N-linked (GlcNAc...) asparagine glycan is linked to Asn36. 2 disulfide bridges follow: Cys80-Cys159 and Cys111-Cys116. His109 functions as the Proton acceptor in the catalytic mechanism. Ca(2+) contacts are provided by Asp110, Val113, Gly115, and Asp117. 3 N-linked (GlcNAc...) asparagine glycosylation sites follow: Asn126, Asn161, and Asn199. Disulfide bonds link Cys166–Cys352 and Cys245–Cys264. Pro208 lines the substrate pocket. Residues Asn213 and Asn225 are each glycosylated (N-linked (GlcNAc...) asparagine). Residue His238 participates in heme b binding. Position 239 (Thr239) interacts with Ca(2+). Residue Asn263 is glycosylated (N-linked (GlcNAc...) asparagine). Ca(2+) is bound by residues Asp277, Thr279, and Asp284.

Belongs to the peroxidase family. Classical plant (class III) peroxidase subfamily. The cofactor is Ca(2+). It depends on heme b as a cofactor.

It localises to the secreted. It catalyses the reaction 2 a phenolic donor + H2O2 = 2 a phenolic radical donor + 2 H2O. Its function is as follows. Removal of H(2)O(2), oxidation of toxic reductants, biosynthesis and degradation of lignin, suberization, auxin catabolism, response to environmental stresses such as wounding, pathogen attack and oxidative stress. These functions might be dependent on each isozyme/isoform in each plant tissue. Suggested to catalyze the deposition of the aromatic residues of suberin on the cell wall and thus play a role in cell-suberization. The protein is Suberization-associated anionic peroxidase of Solanum tuberosum (Potato).